Reading from the N-terminus, the 260-residue chain is CD40 ligand (260 aa).

The Cytoplasmic portion of the chain corresponds to 1 to 22 (MIETYSQTAPRSVAPGPPVSMK). The chain crosses the membrane as a helical; Signal-anchor for type II membrane protein span at residues 23 to 46 (IFMYLLTVFLITQMIGSALFAVYL). At 47 to 260 (HRRLDKIEDE…GFTSFGLLKL (214 aa)) the chain is on the extracellular side. A THD domain is found at 121-260 (VAAHVISEAS…GFTSFGLLKL (140 aa)). Cys177 and Cys217 form a disulfide bridge. N-linked (GlcNAc...) asparagine glycosylation occurs at Asn239.

It belongs to the tumor necrosis factor family. As to quaternary structure, homotrimer. Interacts with CD28. CD40 ligand, soluble form: Exists as either a monomer or a homotrimer. Forms a ternary complex between CD40 and integrins for CD40-CD40LG signaling. Post-translationally, the soluble form derives from the membrane form by proteolytic processing.

Its subcellular location is the cell membrane. It localises to the cell surface. It is found in the secreted. In terms of biological role, cytokine that acts as a ligand to CD40/TNFRSF5. Costimulates T-cell proliferation and cytokine production. Its cross-linking on T-cells generates a costimulatory signal which enhances the production of IL4 and IL10 in conjunction with the TCR/CD3 ligation and CD28 costimulation. Induces the activation of NF-kappa-B. Induces the activation of kinases MAPK8 and PAK2 in T-cells. Mediates B-cell proliferation in the absence of co-stimulus as well as IgE production in the presence of IL4. Involved in immunoglobulin class switching. Functionally, acts as a ligand for integrins, specifically ITGA5:ITGB1 and ITGAV:ITGB3; both integrins and the CD40 receptor are required for activation of CD40-CD40LG signaling, which have cell-type dependent effects, such as B-cell activation, NF-kappa-B signaling and anti-apoptotic signaling. This Felis catus (Cat) protein is CD40 ligand (CD40LG).